A 39-amino-acid polypeptide reads, in one-letter code: Large ribosomal subunit protein bL36 (39 aa).

Belongs to the bacterial ribosomal protein bL36 family.

The polypeptide is Large ribosomal subunit protein bL36 (Leuconostoc mesenteroides subsp. mesenteroides (strain ATCC 8293 / DSM 20343 / BCRC 11652 / CCM 1803 / JCM 6124 / NCDO 523 / NBRC 100496 / NCIMB 8023 / NCTC 12954 / NRRL B-1118 / 37Y)).